We begin with the raw amino-acid sequence, 472 residues long: Argininosuccinate lyase (472 aa).

The protein belongs to the lyase 1 family. Argininosuccinate lyase subfamily.

It localises to the cytoplasm. The catalysed reaction is 2-(N(omega)-L-arginino)succinate = fumarate + L-arginine. The protein operates within amino-acid biosynthesis; L-arginine biosynthesis; L-arginine from L-ornithine and carbamoyl phosphate: step 3/3. This is Argininosuccinate lyase from Mycolicibacterium paratuberculosis (strain ATCC BAA-968 / K-10) (Mycobacterium paratuberculosis).